A 452-amino-acid chain; its full sequence is tRNA-2-methylthio-N(6)-dimethylallyladenosine synthase (452 aa).

The MTTase N-terminal domain maps to 3-118; sequence KKVFIKTYGC…LPQLLAERER (116 aa). Residues Cys12, Cys49, Cys81, Cys155, Cys159, and Cys162 each coordinate [4Fe-4S] cluster. Residues 141–379 enclose the Radical SAM core domain; sequence RVEGASAFVS…QTVINDSIKR (239 aa). A TRAM domain is found at 382–445; sequence ESRLGTVQRI…SFTLRGEVVT (64 aa).

It belongs to the methylthiotransferase family. MiaB subfamily. As to quaternary structure, monomer. [4Fe-4S] cluster is required as a cofactor.

It is found in the cytoplasm. The catalysed reaction is N(6)-dimethylallyladenosine(37) in tRNA + (sulfur carrier)-SH + AH2 + 2 S-adenosyl-L-methionine = 2-methylsulfanyl-N(6)-dimethylallyladenosine(37) in tRNA + (sulfur carrier)-H + 5'-deoxyadenosine + L-methionine + A + S-adenosyl-L-homocysteine + 2 H(+). Catalyzes the methylthiolation of N6-(dimethylallyl)adenosine (i(6)A), leading to the formation of 2-methylthio-N6-(dimethylallyl)adenosine (ms(2)i(6)A) at position 37 in tRNAs that read codons beginning with uridine. The sequence is that of tRNA-2-methylthio-N(6)-dimethylallyladenosine synthase from Albidiferax ferrireducens (strain ATCC BAA-621 / DSM 15236 / T118) (Rhodoferax ferrireducens).